A 559-amino-acid polypeptide reads, in one-letter code: 2-succinyl-5-enolpyruvyl-6-hydroxy-3-cyclohexene-1-carboxylate synthase (559 aa).

It belongs to the TPP enzyme family. MenD subfamily. As to quaternary structure, homodimer. Mg(2+) is required as a cofactor. It depends on Mn(2+) as a cofactor. Thiamine diphosphate serves as cofactor.

It carries out the reaction isochorismate + 2-oxoglutarate + H(+) = 5-enolpyruvoyl-6-hydroxy-2-succinyl-cyclohex-3-ene-1-carboxylate + CO2. Its pathway is quinol/quinone metabolism; 1,4-dihydroxy-2-naphthoate biosynthesis; 1,4-dihydroxy-2-naphthoate from chorismate: step 2/7. The protein operates within quinol/quinone metabolism; menaquinone biosynthesis. Functionally, catalyzes the thiamine diphosphate-dependent decarboxylation of 2-oxoglutarate and the subsequent addition of the resulting succinic semialdehyde-thiamine pyrophosphate anion to isochorismate to yield 2-succinyl-5-enolpyruvyl-6-hydroxy-3-cyclohexene-1-carboxylate (SEPHCHC). The chain is 2-succinyl-5-enolpyruvyl-6-hydroxy-3-cyclohexene-1-carboxylate synthase from Edwardsiella ictaluri (strain 93-146).